We begin with the raw amino-acid sequence, 368 residues long: Zinc finger protein 24 (368 aa).

Lys22 participates in a covalent cross-link: Glycyl lysine isopeptide (Lys-Gly) (interchain with G-Cter in SUMO2). Lys27 participates in a covalent cross-link: Glycyl lysine isopeptide (Lys-Gly) (interchain with G-Cter in SUMO1); alternate. Lys27 participates in a covalent cross-link: Glycyl lysine isopeptide (Lys-Gly) (interchain with G-Cter in SUMO2); alternate. An SCAN box domain is found at 52-134 (RQRFRQFGYQ…TVLEDLESEL (83 aa)). Ser132 and Ser142 each carry phosphoserine. Glycyl lysine isopeptide (Lys-Gly) (interchain with G-Cter in SUMO2) cross-links involve residues Lys147, Lys177, and Lys236. The C2H2-type 1 zinc-finger motif lies at 251–273 (HICDECGKHFSQGSALILHQRIH). A necessary and sufficient for nuclear localization region spans residues 251–301 (HICDECGKHFSQGSALILHQRIHSGEKPYGCVECGKAFSRSSILVQHQRVH). Ser274 is subject to Phosphoserine. Glycyl lysine isopeptide (Lys-Gly) (interchain with G-Cter in SUMO2) cross-links involve residues Lys277 and Lys286. 3 consecutive C2H2-type zinc fingers follow at residues 279–301 (YGCV…QRVH), 307–329 (YKCL…QRIH), and 335–357 (YECV…QRRH). Ser292 carries the phosphoserine modification. Tyr335 bears the Phosphotyrosine mark. Residues Lys361 and Lys367 each participate in a glycyl lysine isopeptide (Lys-Gly) (interchain with G-Cter in SUMO2) cross-link.

It belongs to the krueppel C2H2-type zinc-finger protein family. In terms of processing, sumoylated. As to expression, expressed in many tissues except in heart.

The protein resides in the nucleus. Transcription factor required for myelination of differentiated oligodendrocytes. Required for the conversion of oligodendrocytes from the premyelinating to the myelinating state. In the developing central nervous system (CNS), involved in the maintenance in the progenitor stage by promoting the cell cycle. Specifically binds to the 5'-TCAT-3' DNA sequence. Has transcription repressor activity in vitro. This chain is Zinc finger protein 24 (ZNF24), found in Homo sapiens (Human).